The primary structure comprises 332 residues: C4-dicarboxylate-binding periplasmic protein DctP (332 aa).

Positions 1 to 22 (MFKPLTLIAASILAVTSFNAAA) are cleaved as a signal peptide.

It belongs to the bacterial solute-binding protein 7 family. In terms of assembly, the complex comprises the extracytoplasmic solute receptor protein DctP, and the two transmembrane proteins DctQ and DctM.

The protein localises to the periplasm. Part of the tripartite ATP-independent periplasmic (TRAP) transport system DctPQM involved in C4-dicarboxylates uptake. The sequence is that of C4-dicarboxylate-binding periplasmic protein DctP from Vibrio cholerae serotype O1 (strain ATCC 39315 / El Tor Inaba N16961).